Reading from the N-terminus, the 132-residue chain is D-ribose pyranase (132 aa).

The active-site Proton donor is the H20. Substrate is bound by residues D28, H99, and 121-123 (YSN).

This sequence belongs to the RbsD / FucU family. RbsD subfamily. As to quaternary structure, homodecamer.

It localises to the cytoplasm. The enzyme catalyses beta-D-ribopyranose = beta-D-ribofuranose. The protein operates within carbohydrate metabolism; D-ribose degradation; D-ribose 5-phosphate from beta-D-ribopyranose: step 1/2. Catalyzes the interconversion of beta-pyran and beta-furan forms of D-ribose. The polypeptide is D-ribose pyranase (Streptococcus uberis (strain ATCC BAA-854 / 0140J)).